Reading from the N-terminus, the 429-residue chain is WRKY transcription factor 44 (429 aa).

The WRKY 1 DNA-binding region spans 159-223 (TGDRSSVDGY…YQGEHNHSKP (65 aa)). Cys190, Cys195, His218, and His220 together coordinate Zn(2+). Disordered stretches follow at residues 214–279 (YQGE…RTEK) and 292–348 (AVPR…SDSL). Polar residues-rich tracts occupy residues 254–275 (QDPNNNLYSPLWNNQSNDSTQN), 295–313 (RSTNSNPGTSDSGCKSSQC), and 334–345 (SEAGVSQGSVES). Positions 343–408 (VESDSLEDGF…YEGKHNHHLL (66 aa)) form a DNA-binding region, WRKY 2. Residues Cys374, Cys379, His403, and His405 each coordinate Zn(2+). Positions 410 to 422 (SPPSSSTLPFNSP) are enriched in low complexity. Residues 410–429 (SPPSSSTLPFNSPQLSKQTI) form a disordered region.

It belongs to the WRKY group I family. Leaf promordia, trichomes, atrichoblasts, fertilized eggs, seed coat.

Its subcellular location is the nucleus. Its function is as follows. Transcription factor. Interacts specifically with the W box (5'-(T)TGAC[CT]-3'), a frequently occurring elicitor-responsive cis-acting element. Regulates trichome development, production of mucilage and tannin in seed coats, and maybe root hair development. The chain is WRKY transcription factor 44 (WRKY44) from Arabidopsis thaliana (Mouse-ear cress).